The following is a 336-amino-acid chain: Glyceraldehyde-3-phosphate dehydrogenase 1 (336 aa).

NAD(+) is bound by residues 13–14 and Asp-35; that span reads RI. Residue Ser-59 is modified to Phosphoserine. Arg-80 lines the NAD(+) pocket. Ser-125 is modified (phosphoserine). D-glyceraldehyde 3-phosphate is bound by residues 151-153, Thr-182, 211-212, and Arg-234; these read SCT and TG. Cys-152 serves as the catalytic Nucleophile. Asn-316 serves as a coordination point for NAD(+).

Belongs to the glyceraldehyde-3-phosphate dehydrogenase family. Homotetramer.

It localises to the cytoplasm. The catalysed reaction is D-glyceraldehyde 3-phosphate + phosphate + NAD(+) = (2R)-3-phospho-glyceroyl phosphate + NADH + H(+). The protein operates within carbohydrate degradation; glycolysis; pyruvate from D-glyceraldehyde 3-phosphate: step 1/5. The chain is Glyceraldehyde-3-phosphate dehydrogenase 1 (tdh1) from Schizosaccharomyces pombe (strain 972 / ATCC 24843) (Fission yeast).